The primary structure comprises 193 residues: Tellurium resistance protein TerZ (193 aa).

Belongs to the CAPAB/TerDEXZ family.

Its function is as follows. Not known; seems to contribute to the tellurium resistance (Ter) mechanism. Also involved in phage inhibition (Phi) and colicin resistance (PacB). This chain is Tellurium resistance protein TerZ (terZ), found in Serratia marcescens.